A 227-amino-acid polypeptide reads, in one-letter code: Fibrillarin-like rRNA/tRNA 2'-O-methyltransferase (227 aa).

S-adenosyl-L-methionine contacts are provided by residues 86–87 (TT), 105–106 (EF), 130–131 (DA), and 150–153 (DVAQ).

The protein belongs to the methyltransferase superfamily. Fibrillarin family. As to quaternary structure, interacts with nop5. Component of box C/D small ribonucleoprotein (sRNP) particles that contain rpl7ae, FlpA and nop5, plus a guide RNA.

Functionally, involved in pre-rRNA and tRNA processing. Utilizes the methyl donor S-adenosyl-L-methionine to catalyze the site-specific 2'-hydroxyl methylation of ribose moieties in rRNA and tRNA. Site specificity is provided by a guide RNA that base pairs with the substrate. Methylation occurs at a characteristic distance from the sequence involved in base pairing with the guide RNA. This chain is Fibrillarin-like rRNA/tRNA 2'-O-methyltransferase, found in Pyrococcus abyssi (strain GE5 / Orsay).